The sequence spans 249 residues: Mediator of RNA polymerase II transcription subunit 8 (249 aa).

Residues 154–200 (LEEREMGIQNVVTGLRRQLEDEDEEASESEEEVEEEEMEVVGVRRRS) are a coiled coil. Positions 170–249 (RQLEDEDEEA…MTTGIPPTQR (80 aa)) are disordered. The span at 173–192 (EDEDEEASESEEEVEEEEME) shows a compositional bias: acidic residues. The segment covering 211–232 (AAPAPGSRQQQQQQKAAGPAVP) has biased composition (low complexity).

The protein belongs to the Mediator complex subunit 8 family. As to quaternary structure, component of the Mediator complex.

It localises to the nucleus. Functionally, component of the Mediator complex, a coactivator involved in the regulated transcription of nearly all RNA polymerase II-dependent genes. Mediator functions as a bridge to convey information from gene-specific regulatory proteins to the basal RNA polymerase II transcription machinery. Mediator is recruited to promoters by direct interactions with regulatory proteins and serves as a scaffold for the assembly of a functional preinitiation complex with RNA polymerase II and the general transcription factors. This chain is Mediator of RNA polymerase II transcription subunit 8 (med8), found in Aspergillus fumigatus (strain ATCC MYA-4609 / CBS 101355 / FGSC A1100 / Af293) (Neosartorya fumigata).